The following is a 217-amino-acid chain: NADPH-dependent 3-demethoxyubiquinone 3-hydroxylase, mitochondrial (217 aa).

2 consecutive repeat copies span residues 48-129 and 130-217. The interval 48–217 is 2 X approximate tandem repeats; the sequence is AVDQIIRVDH…SAAIYLSERF (170 aa). Residues glutamate 60, glutamate 90, histidine 93, glutamate 142, glutamate 178, and histidine 181 each contribute to the Fe cation site. Tyrosine 212 and arginine 216 together coordinate NADH.

This sequence belongs to the COQ7 family. In terms of assembly, component of a multi-subunit COQ enzyme complex. Interacts with COQ8B and COQ6. Interacts with COQ9. The cofactor is Fe cation.

It is found in the mitochondrion inner membrane. The enzyme catalyses a 5-methoxy-2-methyl-3-(all-trans-polyprenyl)benzoquinone + NADH + O2 = a 3-demethylubiquinone + NAD(+) + H2O. The protein operates within cofactor biosynthesis; ubiquinone biosynthesis. Functionally, catalyzes the hydroxylation of the 5-methoxy-2-methyl-3-(all-trans-polyprenyl)benzoquinone at the C6 position and participates in the biosynthesis of ubiquinone. Catalyzes the reaction through a substrate-mediated reduction pathway, whereby NADH shuttles electrons to 5-methoxy-2-methyl-3-(all-trans-decaprenyl)benzoquinone, which then transfers the electrons to the two Fe(3+) centers. The binding of 5-methoxy-2-methyl-3-(all-trans-polyprenyl)benzoquinone (DMQn) mediates reduction of the diiron center by nicotinamide adenine dinucleotide (NADH) and initiates oxygen activation for subsequent DMQ hydroxylation. The physiological substrates are 5-methoxy-2-methyl-3-(all-trans-nonaprenyl)benzoquinone (DMQ(9)) and 5-methoxy-2-methyl-3-(all-trans-decaprenyl)benzoquinone (DMQ(10)), however in vitro the enzyme does not have any specificity concerning the length of the polyprenyl tail, and accepts tails of various lengths with similar efficiency. Also has a structural role in the COQ enzyme complex, stabilizing other COQ polypeptides. Involved in lifespan determination in a ubiquinone-independent manner. Plays a role in modulating mitochondrial stress responses, acting in the nucleus, perhaps via regulating gene expression, independent of its characterized mitochondrial function in ubiquinone biosynthesis. The protein is NADPH-dependent 3-demethoxyubiquinone 3-hydroxylase, mitochondrial of Rattus norvegicus (Rat).